The sequence spans 249 residues: 5'-nucleotidase SurE (249 aa).

4 residues coordinate a divalent metal cation: aspartate 9, aspartate 10, serine 40, and asparagine 92.

It belongs to the SurE nucleotidase family. Requires a divalent metal cation as cofactor.

Its subcellular location is the cytoplasm. It carries out the reaction a ribonucleoside 5'-phosphate + H2O = a ribonucleoside + phosphate. Nucleotidase that shows phosphatase activity on nucleoside 5'-monophosphates. This is 5'-nucleotidase SurE from Shewanella baltica (strain OS195).